A 200-amino-acid chain; its full sequence is Recombination protein RecR (200 aa).

The C4-type zinc-finger motif lies at 57 to 72 (CRQCRTLTEEELCPQC). One can recognise a Toprim domain in the interval 80–175 (TLLCVVEGPM…ITSRIAHGVP (96 aa)).

Belongs to the RecR family.

May play a role in DNA repair. It seems to be involved in an RecBC-independent recombinational process of DNA repair. It may act with RecF and RecO. The chain is Recombination protein RecR from Pseudomonas fluorescens (strain SBW25).